Consider the following 804-residue polypeptide: Ribonucleoside-diphosphate reductase large subunit (804 aa).

Positions 1 to 92 constitute an ATP-cone domain; sequence MYVLNRKGEE…TDNLHKNTSD (92 aa). Residues 5-6, 11-17, threonine 53, and aspartate 57 contribute to the ATP site; these read NR and EDISFDQ. Residue serine 216 coordinates GDP. A disulfide bridge links cysteine 217 with cysteine 442. Residues 225-227, lysine 242, arginine 255, and 262-263 each bind dTTP; these read DSI and RG. Asparagine 425 lines the GDP pocket. Catalysis depends on asparagine 425, which acts as the Proton acceptor. The active-site Cysteine radical intermediate is cysteine 427. Residues glutamate 429 and 603-606 each bind GDP; that span reads TAST. Glutamate 429 acts as the Proton acceptor in catalysis.

It belongs to the ribonucleoside diphosphate reductase large chain family. In terms of assembly, heterodimer of a large and a small subunit.

It carries out the reaction a 2'-deoxyribonucleoside 5'-diphosphate + [thioredoxin]-disulfide + H2O = a ribonucleoside 5'-diphosphate + [thioredoxin]-dithiol. Under complex allosteric control mediated by deoxynucleoside triphosphates and ATP binding to separate specificity and activation sites on the large subunit. The type of nucleotide bound at the specificity site determines substrate preference. It seems probable that ATP makes the enzyme reduce CDP and UDP, dGTP favors ADP reduction and dTTP favors GDP reduction. Stimulated by ATP and inhibited by dATP binding to the activity site. Its function is as follows. Provides the precursors necessary for DNA synthesis. Catalyzes the biosynthesis of deoxyribonucleotides from the corresponding ribonucleotides. The sequence is that of Ribonucleoside-diphosphate reductase large subunit (RNR1) from Plasmodium falciparum (isolate FCR-3 / Gambia).